The chain runs to 440 residues: Alpha-methylserine aldolase (440 aa).

Lysine 255 is modified (N6-(pyridoxal phosphate)lysine).

It belongs to the SHMT family. Alpha-methylserine aldolase subfamily. As to quaternary structure, homodimer. Pyridoxal 5'-phosphate serves as cofactor.

It carries out the reaction 2-methyl-L-serine = formaldehyde + L-alanine. Catalyzes the reversible interconversion of alpha-methyl-L-serine to L-alanine and formaldehyde. In Variovorax paradoxus, this protein is Alpha-methylserine aldolase.